The chain runs to 237 residues: Phosphoribosylaminoimidazole-succinocarboxamide synthase (237 aa).

The protein belongs to the SAICAR synthetase family.

It carries out the reaction 5-amino-1-(5-phospho-D-ribosyl)imidazole-4-carboxylate + L-aspartate + ATP = (2S)-2-[5-amino-1-(5-phospho-beta-D-ribosyl)imidazole-4-carboxamido]succinate + ADP + phosphate + 2 H(+). It participates in purine metabolism; IMP biosynthesis via de novo pathway; 5-amino-1-(5-phospho-D-ribosyl)imidazole-4-carboxamide from 5-amino-1-(5-phospho-D-ribosyl)imidazole-4-carboxylate: step 1/2. This is Phosphoribosylaminoimidazole-succinocarboxamide synthase from Proteus mirabilis (strain HI4320).